Here is a 332-residue protein sequence, read N- to C-terminus: Probable sugar phosphate/phosphate translocator At1g53660 (332 aa).

A run of 10 helical transmembrane segments spans residues 19-39 (ASILLYITLSSGQIFFNKWVL), 46-66 (FPYPLGLTLLHMTFSSVLCFL), 82-102 (LEIYVTSVIPIGAMFAMTLWL), 120-140 (AIMPVAVFILGVCVGLEIMSC), 143-163 (LLIMSVISFGVLVSSYGELNI), 165-185 (WVGVVYQMGGIVSEALRLILM), 199-219 (LSLMYYMSPCSAICLFIPWIF), 233-253 (LVLSLNSLCTFALNLSVFLVI), 259-281 (LTIRIAGVVKDWLVVLVSALLFA), and 285-304 (LTIINLFGYAVAIVGVATYN). Positions 312 to 322 (ESITLVSQSPK) are enriched in polar residues. The interval 312 to 332 (ESITLVSQSPKNSDKKPDGPL) is disordered. A compositionally biased stretch (basic and acidic residues) spans 323–332 (NSDKKPDGPL).

It belongs to the TPT transporter family. TPT (TC 2.A.7.9) subfamily.

It is found in the membrane. The protein is Probable sugar phosphate/phosphate translocator At1g53660 of Arabidopsis thaliana (Mouse-ear cress).